Here is a 202-residue protein sequence, read N- to C-terminus: MHNAPESVFNALVPMVVEQTAKGERSYDIYSRLLKERVIFLVGQVEEHMANLIVAQLLFLESENPDKEIYLYINSPGGSVTAGMAIYDTMQFIKPKVSTVCIGQACSMGAFLLAGGEKGMRHCLPNSRVMIHQPLGGFQGQASDIAIHAQEILGIKHKLNQMLSHHTGQPMEVIERDTDRDNFMSATQAVEYGLIDSVLTSR.

The active-site Nucleophile is the S107. Residue H132 is part of the active site.

Belongs to the peptidase S14 family. Fourteen ClpP subunits assemble into 2 heptameric rings which stack back to back to give a disk-like structure with a central cavity, resembling the structure of eukaryotic proteasomes.

It is found in the cytoplasm. The catalysed reaction is Hydrolysis of proteins to small peptides in the presence of ATP and magnesium. alpha-casein is the usual test substrate. In the absence of ATP, only oligopeptides shorter than five residues are hydrolyzed (such as succinyl-Leu-Tyr-|-NHMec, and Leu-Tyr-Leu-|-Tyr-Trp, in which cleavage of the -Tyr-|-Leu- and -Tyr-|-Trp bonds also occurs).. In terms of biological role, cleaves peptides in various proteins in a process that requires ATP hydrolysis. Has a chymotrypsin-like activity. Plays a major role in the degradation of misfolded proteins. This Shewanella amazonensis (strain ATCC BAA-1098 / SB2B) protein is ATP-dependent Clp protease proteolytic subunit.